The primary structure comprises 393 residues: Diphosphomevalonate decarboxylase (393 aa).

(R)-5-diphosphomevalonate is bound by residues 21–24, Arg77, 156–161, and Thr212; these read YWGK and SGSACR.

This sequence belongs to the diphosphomevalonate decarboxylase family. Homodimer.

It is found in the cytoplasm. Its subcellular location is the nucleus. The catalysed reaction is (R)-5-diphosphomevalonate + ATP = isopentenyl diphosphate + ADP + phosphate + CO2. It participates in isoprenoid biosynthesis; isopentenyl diphosphate biosynthesis via mevalonate pathway; isopentenyl diphosphate from (R)-mevalonate: step 3/3. Functionally, diphosphomevalonate decarboxylase; part of the second module of ergosterol biosynthesis pathway that includes the middle steps of the pathway. Mvd1 converts diphosphomevalonate into isopentenyl diphosphate. The second module is carried out in the vacuole and involves the formation of farnesyl diphosphate, which is also an important intermediate in the biosynthesis of ubiquinone, dolichol, heme and prenylated proteins. Activity by the mevalonate kinase erg12 first converts mevalonate into 5-phosphomevalonate. 5-phosphomevalonate is then further converted to 5-diphosphomevalonate by the phosphomevalonate kinase erg8. The diphosphomevalonate decarboxylase mvd1 then produces isopentenyl diphosphate. The isopentenyl-diphosphate delta-isomerase idi1 then catalyzes the 1,3-allylic rearrangement of the homoallylic substrate isopentenyl (IPP) to its highly electrophilic allylic isomer, dimethylallyl diphosphate (DMAPP). Finally the farnesyl diphosphate synthase fps1 catalyzes the sequential condensation of isopentenyl pyrophosphate with dimethylallyl pyrophosphate, and then with the resultant geranylpyrophosphate to the ultimate product farnesyl pyrophosphate. The protein is Diphosphomevalonate decarboxylase (mvd1) of Schizosaccharomyces pombe (strain 972 / ATCC 24843) (Fission yeast).